The chain runs to 167 residues: Peptide deformylase (167 aa).

Residues C91 and H133 each contribute to the Fe cation site. Residue E134 is part of the active site. H137 is a binding site for Fe cation.

The protein belongs to the polypeptide deformylase family. Requires Fe(2+) as cofactor.

The enzyme catalyses N-terminal N-formyl-L-methionyl-[peptide] + H2O = N-terminal L-methionyl-[peptide] + formate. Removes the formyl group from the N-terminal Met of newly synthesized proteins. Requires at least a dipeptide for an efficient rate of reaction. N-terminal L-methionine is a prerequisite for activity but the enzyme has broad specificity at other positions. The polypeptide is Peptide deformylase (Chromobacterium violaceum (strain ATCC 12472 / DSM 30191 / JCM 1249 / CCUG 213 / NBRC 12614 / NCIMB 9131 / NCTC 9757 / MK)).